Here is a 40-residue protein sequence, read N- to C-terminus: Chaperonin HSP60, mitochondrial (40 aa).

The protein belongs to the chaperonin (HSP60) family.

The protein resides in the mitochondrion. Implicated in mitochondrial protein import and macromolecular assembly. May facilitate the correct folding of imported proteins. May also prevent misfolding and promote the refolding and proper assembly of unfolded polypeptides generated under stress conditions in the mitochondrial matrix. The polypeptide is Chaperonin HSP60, mitochondrial (Solanum tuberosum (Potato)).